Consider the following 495-residue polypeptide: Dihydrolipoyl dehydrogenase, mitochondrial (495 aa).

FAD-binding positions include 59–68 (EKNATLGGTC), Lys77, and 169–171 (SGS). Cys68 and Cys73 form a disulfide bridge. NAD(+)-binding positions include 206–213 (GAGVIGLE), Glu229, Val264, and Gly299. FAD is bound by residues Asp340 and 346-349 (MLAH). The active-site Proton acceptor is the His472.

It belongs to the class-I pyridine nucleotide-disulfide oxidoreductase family. FAD is required as a cofactor.

Its subcellular location is the mitochondrion matrix. The catalysed reaction is N(6)-[(R)-dihydrolipoyl]-L-lysyl-[protein] + NAD(+) = N(6)-[(R)-lipoyl]-L-lysyl-[protein] + NADH + H(+). The sequence is that of Dihydrolipoyl dehydrogenase, mitochondrial (dld-1) from Caenorhabditis elegans.